A 504-amino-acid chain; its full sequence is L-arabinose isomerase (504 aa).

Mn(2+) is bound by residues Glu308, Glu335, His352, and His452.

Belongs to the arabinose isomerase family. Requires Mn(2+) as cofactor.

It carries out the reaction beta-L-arabinopyranose = L-ribulose. Its pathway is carbohydrate degradation; L-arabinose degradation via L-ribulose; D-xylulose 5-phosphate from L-arabinose (bacterial route): step 1/3. In terms of biological role, catalyzes the conversion of L-arabinose to L-ribulose. This Bifidobacterium adolescentis (strain ATCC 15703 / DSM 20083 / NCTC 11814 / E194a) protein is L-arabinose isomerase.